Here is a 697-residue protein sequence, read N- to C-terminus: Portal protein (697 aa).

Residues 633-697 (MSREAAGGVP…RRAGGPYGFH (65 aa)) form a disordered region. Basic and acidic residues predominate over residues 664–689 (ITADEERRGPERVGRFRNGGPDDPRR).

The protein belongs to the herpesviridae portal protein family. Homododecamerizes. Interacts with terminase subunits TRM1 and TRM3.

Its subcellular location is the virion. It localises to the host nucleus. Forms a portal in the viral capsid through which viral DNA is translocated during DNA packaging. Assembles as a dodecamer at a single fivefold axe of the T=16 icosahedric capsid. Binds to the molecular motor that translocates the viral DNA, termed terminase. This chain is Portal protein (UL104), found in Homo sapiens (Human).